We begin with the raw amino-acid sequence, 1263 residues long: DNA topoisomerase 2 (1263 aa).

Residues asparagine 80, asparagine 109, 137–139 (STN), and 150–157 (GKNGFGAK) contribute to the ATP site. The segment at 329–331 (VKK) is interaction with DNA. 362–364 (QTK) contributes to the ATP binding site. The Toprim domain occupies 439 to 553 (CTLILTEGDS…SLVKYEGFIQ (115 aa)). Positions 445, 522, and 524 each coordinate Mg(2+). One can recognise a Topo IIA-type catalytic domain in the interval 737–1223 (VPNLMDGFKP…SPEEIWEEEL (487 aa)). Tyrosine 828 functions as the O-(5'-phospho-DNA)-tyrosine intermediate in the catalytic mechanism. Residues 977–1015 (KKASKAVSSAKNTKTTTKAGSKTGSRTRKNPALAKKSQK) are disordered. Residues 981-1000 (KAVSSAKNTKTTTKAGSKTG) are compositionally biased toward low complexity. The tract at residues 1068–1077 (KLVKPLNLTN) is interaction with DNA. Residues 1244-1263 (LLNKKKGSTGKKSRKTSTQK) form a disordered region. Residues 1247 to 1263 (KKKGSTGKKSRKTSTQK) show a composition bias toward basic residues.

This sequence belongs to the type II topoisomerase family. Mg(2+) serves as cofactor. The cofactor is Mn(2+). Ca(2+) is required as a cofactor.

The enzyme catalyses ATP-dependent breakage, passage and rejoining of double-stranded DNA.. Can introduce negative superhelical turns into double-stranded circular DNA. In Acanthamoeba polyphaga (Amoeba), this protein is DNA topoisomerase 2 (TOP2).